Consider the following 2026-residue polypeptide: Fatty acid synthase subunit beta (2026 aa).

The tract at residues 148–526 (ILMAFGGQGS…VDGRGVRIIA (379 aa)) is acetyltransferase (AT) domain. Serine 268 functions as the For acetyltransferase activity in the catalytic mechanism. An enoyl reductase (ER) domain region spans residues 579–824 (SQLLQAPPII…LILAAAGVAD (246 aa)). The segment at 1130–1604 (SQVTGSVRSA…LPGDQLTVRI (475 aa)) is dehydratase (DH) domain. In terms of domain architecture, MaoC-like spans 1512–1625 (PGLIDNGSRT…LSVAAYREGT (114 aa)). Residues 1643–2016 (YLFTGQGSQA…LEEAAAVTGS (374 aa)) are malonyl/palmitoyl transferase (MT/PT) domain. The For malonyltransferase activity role is filled by serine 1788.

It belongs to the fungal fatty acid synthetase subunit beta family. [Alpha(6)beta(6)] hexamers of two multifunctional subunits (alpha and beta).

It carries out the reaction acetyl-CoA + n malonyl-CoA + 2n NADPH + 4n H(+) = a long-chain-acyl-CoA + n CoA + n CO2 + 2n NADP(+).. It catalyses the reaction holo-[ACP] + acetyl-CoA = acetyl-[ACP] + CoA. The enzyme catalyses holo-[ACP] + malonyl-CoA = malonyl-[ACP] + CoA. The catalysed reaction is a (3R)-hydroxyacyl-[ACP] = a (2E)-enoyl-[ACP] + H2O. It carries out the reaction a 2,3-saturated acyl-[ACP] + NAD(+) = a (2E)-enoyl-[ACP] + NADH + H(+). It catalyses the reaction (9Z)-octadecenoyl-[ACP] + H2O = (9Z)-octadecenoate + holo-[ACP] + H(+). The protein operates within secondary metabolite biosynthesis. Functionally, fatty acid synthase beta subunit; part of the gene cluster that mediates the biosynthesis of oryzines, natural products with an unusual maleidride backbone. The two subunits of the fungal fatty acid synthase oryfasA and oryfasB probably form octenoic acid. This fatty acid is most likely activated by the acyl-CoA ligase oryP to give octenyl-CoA before the citrate synthase-like protein oryE catalyzes condensation with oxaloacetate to form tricarboxylic acid. The next steps of the pathways are conjectural, but a favorite possible route has been proposed, beginning with decarboxylation and concomitant dehydration by the decarboxylase oryM, followed by tautomerization, which may lead to the production of a diene intermediate. Reduction of this diene intermediate could give the known metabolite piliformic acid. On the pathway to oryzine B and oryzine A, however, hydroxylation of the diene by the alpha-ketoglutarate-dependent dioxygenase oryG and lactonisation by the lactonohydrolases oryH or oryL could give oryzine B directly. Finally, enoyl reduction by the dehydrogenase oryD would then convert oryzine B into oryzine A. This is Fatty acid synthase subunit beta from Aspergillus oryzae (strain ATCC 42149 / RIB 40) (Yellow koji mold).